Here is a 490-residue protein sequence, read N- to C-terminus: Cysteine--tRNA ligase (490 aa).

Cys36 is a Zn(2+) binding site. Residues 38-48 (VTVYDYSHIGH) carry the 'HIGH' region motif. Zn(2+) is bound by residues Cys216, His241, and Glu245. A 'KMSKS' region motif is present at residues 278–282 (KMSKS). Lys281 provides a ligand contact to ATP.

Belongs to the class-I aminoacyl-tRNA synthetase family. Monomer. Zn(2+) is required as a cofactor.

It localises to the cytoplasm. It carries out the reaction tRNA(Cys) + L-cysteine + ATP = L-cysteinyl-tRNA(Cys) + AMP + diphosphate. The chain is Cysteine--tRNA ligase from Magnetococcus marinus (strain ATCC BAA-1437 / JCM 17883 / MC-1).